A 294-amino-acid chain; its full sequence is Sarcotoxin II-2 (294 aa).

The signal sequence occupies residues M1–A22. Positions Y23 to P24 are cleaved as a propeptide — removed by a dipeptidylpeptidase. The residue at position 25 (Q25) is a Pyrrolidone carboxylic acid. R293 is subject to Arginine amide.

The protein belongs to the attacin/sarcotoxin-2 family. Synthesized by the fat body and is eventually secreted into the hemolymph.

It is found in the secreted. Functionally, sarcotoxin II is an antibacterial protein which plays a role in the inflammatory response of this insect. The main effect of sarcotoxin II on E.coli may be the inhibition of cell wall synthesis, including septum formation. The chain is Sarcotoxin II-2 from Sarcophaga peregrina (Flesh fly).